Consider the following 233-residue polypeptide: Protein Thf1 (233 aa).

The stretch at 183–205 (DKLSKDLELYRSNLDKMTQALAV) forms a coiled coil. The tract at residues 213-233 (DRKKREQRQQQASTPVAPPNE) is disordered.

Belongs to the THF1 family.

In terms of biological role, may be involved in photosynthetic membrane biogenesis. The protein is Protein Thf1 of Trichormus variabilis (strain ATCC 29413 / PCC 7937) (Anabaena variabilis).